The sequence spans 203 residues: Urease accessory protein UreG (203 aa).

14–21 (GPVGSGKT) lines the GTP pocket.

The protein belongs to the SIMIBI class G3E GTPase family. UreG subfamily. In terms of assembly, homodimer. UreD, UreF and UreG form a complex that acts as a GTP-hydrolysis-dependent molecular chaperone, activating the urease apoprotein by helping to assemble the nickel containing metallocenter of UreC. The UreE protein probably delivers the nickel.

It localises to the cytoplasm. In terms of biological role, facilitates the functional incorporation of the urease nickel metallocenter. This process requires GTP hydrolysis, probably effectuated by UreG. This chain is Urease accessory protein UreG, found in Rhizobium leguminosarum bv. viciae.